Consider the following 132-residue polypeptide: Small ribosomal subunit protein uS11c (132 aa).

Belongs to the universal ribosomal protein uS11 family. Part of the 30S ribosomal subunit.

The protein localises to the plastid. It is found in the chloroplast. The chain is Small ribosomal subunit protein uS11c from Gnetum parvifolium (Small-leaved jointfir).